Consider the following 378-residue polypeptide: UPF0754 membrane protein BCAH820_0954 (378 aa).

A run of 2 helical transmembrane segments spans residues 1–21 (MNIW…GGFT) and 357–377 (YLGA…LLFL).

The protein belongs to the UPF0754 family.

It localises to the cell membrane. This is UPF0754 membrane protein BCAH820_0954 from Bacillus cereus (strain AH820).